A 471-amino-acid polypeptide reads, in one-letter code: MQQEATGGQKIRPIPIIASFLMAGFIGLFSETALNMALSDLIQVFDISSATVQWLTTGYLLTLGILVPISGLLLQWFTTRGLFFTAVSFSIAGTLIAALSPTFAMLMIGRVVQAVGTALLLPLMFNTILLIFPEHKRGSAMGMIGLVIMFAPAVGPTISGLILENLTWNWIFWISLPFLIIALLFGMKFMQNVSVVTKPKIDILSIILSTLGFGGVVFAFSSAGESGWGSATVLVSIIVGGIALGLFVWRQLTMEKPLMDLKVFKYPMFTLGLILVFISFMMILSTMILLPLYLQNSLALAAFSAGLVLLPGGVLNGLMSPFTGRLFDAYGPRALVIPGFIVAVVALFFLTRIEVGTSALTIIVLHSVLMIGISMVMMPAQTNGLNQLPPKLYPDGTAIMNTLQQVSGAIGTAVAITIMSAGQKAYMETAQGVGPEQMVASLTAGIQNAFVFGLIMACIGLLCSLFIRKAK.

Transmembrane regions (helical) follow at residues 13-35 (PIPIIASFLMAGFIGLFSETALN), 55-77 (LTTGYLLTLGILVPISGLLLQWF), 84-106 (FTAVSFSIAGTLIAALSPTFAML), 111-133 (VVQAVGTALLLPLMFNTILLIFP), 140-162 (AMGMIGLVIMFAPAVGPTISGLI), 167-189 (TWNWIFWISLPFLIIALLFGMKF), 201-223 (IDILSIILSTLGFGGVVFAFSSA), 227-249 (GWGSATVLVSIIVGGIALGLFVW), 269-291 (FTLGLILVFISFMMILSTMILLP), 329-351 (AYGPRALVIPGFIVAVVALFFLT), 358-380 (SALTIIVLHSVLMIGISMVMMPA), and 445-467 (GIQNAFVFGLIMACIGLLCSLFI).

It belongs to the major facilitator superfamily. EmrB family.

It localises to the cell membrane. Its function is as follows. Proton-dependent transporter. May mediate the efflux of lincomycin. In Listeria monocytogenes serovar 1/2a (strain ATCC BAA-679 / EGD-e), this protein is Lincomycin resistance protein LmrB (lmrB).